The chain runs to 853 residues: Aminotransferase PigE (853 aa).

G503–T504 provides a ligand contact to pyridoxal 5'-phosphate. K645 carries the post-translational modification N6-(pyridoxal phosphate)lysine. Pyridoxal 5'-phosphate is bound at residue T680.

Belongs to the class-III pyridoxal-phosphate-dependent aminotransferase family. Homodimer. Pyridoxal 5'-phosphate serves as cofactor.

It functions in the pathway antibiotic biosynthesis; prodigiosin biosynthesis. Functionally, involved in the biosynthesis of 2-methyl-3-n-amyl-pyrrole (MAP), one of the terminal products involved in the biosynthesis of the red antibiotic prodigiosin (Pig). Catalyzes the transamination to the aldehyde group of 3-acetyloctanal, resulting in an aminoketone, which spontaneously cyclizes to yield the dihydro form of MAP (H2MAP). The protein is Aminotransferase PigE of Serratia sp. (strain ATCC 39006) (Prodigiosinella confusarubida).